Reading from the N-terminus, the 64-residue chain is MAIKPAYVKKTGTLLMDRYPKAFGDDFEHNKELVDELTNIESKSVRNRIAGYVTRKQRSPQQPA.

Belongs to the eukaryotic ribosomal protein eS17 family.

The sequence is that of Small ribosomal subunit protein eS17 from Natronomonas pharaonis (strain ATCC 35678 / DSM 2160 / CIP 103997 / JCM 8858 / NBRC 14720 / NCIMB 2260 / Gabara) (Halobacterium pharaonis).